The primary structure comprises 177 residues: Large ribosomal subunit protein uL10 (177 aa).

This sequence belongs to the universal ribosomal protein uL10 family. In terms of assembly, part of the ribosomal stalk of the 50S ribosomal subunit. The N-terminus interacts with L11 and the large rRNA to form the base of the stalk. The C-terminus forms an elongated spine to which L12 dimers bind in a sequential fashion forming a multimeric L10(L12)X complex.

Its function is as follows. Forms part of the ribosomal stalk, playing a central role in the interaction of the ribosome with GTP-bound translation factors. The protein is Large ribosomal subunit protein uL10 of Variovorax paradoxus (strain S110).